A 765-amino-acid chain; its full sequence is Zinc finger and BTB domain-containing protein 49 (765 aa).

Positions 25-91 (CDCMLVVKGV…MYTSHLDLNQ (67 aa)) constitute a BTB domain. 2 disordered regions span residues 165–203 (QQNK…GSCT) and 275–294 (NFLA…DATC). C2H2-type zinc fingers lie at residues 395–417 (YACE…KRSH), 423–445 (FECN…LRRH), 451–473 (YICE…IIIH), 479–501 (HLCD…KKTH), 507–529 (FTCD…RIRH), 535–557 (YSCS…VRTH), and 563–585 (YTCE…KKMH).

This sequence belongs to the krueppel C2H2-type zinc-finger protein family. As to quaternary structure, isoform 1 interacts with EP300 and KAT5/Tip60. The interaction with EP300 is direct and leads to synergistic induction of CDKN1A. On the CDKN1A promoter, forms a complex with ZBTB17/Miz-1; this interaction leads to additive CDKN1A transactivation. Isoform 3 also interacts with ZBTB17; this interaction may block ZBTB17 repressor activity. In terms of tissue distribution, highly expressed in normal epidermis and in other epithelial tissues, including in colon and lung. Tends to be down-regulated in colon, lung and skin cancer tissues.

It localises to the cytoplasm. The protein resides in the nucleus. Functionally, transcription factor. Inhibits cell proliferation by activating either CDKN1A/p21 transcription or RB1 transcription. Binds CDKN1A promoter and activates its transcription; this activity is further potentiated in the presence of EP300 (synergistic) and ZBTB17/Miz-1 (additive). Its function is as follows. Activates RB1 transcription most probably by antagonizing ZBTB17 repression of RB1. Does not bind directly RB1 promoter. This Homo sapiens (Human) protein is Zinc finger and BTB domain-containing protein 49 (ZBTB49).